Reading from the N-terminus, the 488-residue chain is Neisserial heparin binding antigen (488 aa).

Residues 1 to 17 form the signal peptide; sequence MFKRSVIAMACIFALSA. Cys-18 is lipidated: N-palmitoyl cysteine. Cys-18 carries S-diacylglycerol cysteine lipidation. The tract at residues 21–201 is disordered; it reads GGGGSPDVKS…NPAPANGGSN (181 aa). Residues 43–53 show a composition bias toward basic and acidic residues; that stretch reads SEKETEAKEDA. Over residues 54-70 the composition is skewed to low complexity; it reads PQAGSQGQGAPSAQGSQ. 2 stretches are compositionally biased toward polar residues: residues 101-118 and 127-142; these read DMPQ…NHTP and MENQ…QPAN. Low complexity predominate over residues 160–183; it reads AGGQNAGNTAAQGANQAGNNQAAG. The Arg-rich motif motif lies at 296 to 306; the sequence is RFRRSARSRRS. The tract at residues 306 to 488 is C1 fragment; it reads SLPAEMPLIP…GVFAGKKEQD (183 aa).

The protein belongs to the NHBA family. The C-terminal beta-barrel forms a monomer. Post-translationally, cleaved in vivo by the Neisserial phase-variable autotransporter/serine protease NalP to give 2 fragments. The N-terminus remains in the cell outer membrane while the 22 kDa C-terminus (beginning on Ser-293) is soluble; this soluble fragment is called C2. Cleaved in vitro by human lactoferrin (LTF, between Arg-305 and Ser-306), this fragment is called C1. Cleavage by NalP or lactoferrin does not alter killing of Neisseria by bactericidal antibodies in vitro. Recombinant and cell surface protein is cleaved by human saliva kallikrein (KLK1) between Ser-303 and Arg-304; in saliva kallikrein is more active on NHBA than lactoferrin. Human plasma kallikrein (KLKB1) cleaves in a similar manner to KLK1.

It is found in the cell outer membrane. The protein localises to the cell surface. It localises to the host mitochondrion. Functionally, a major human immunogenic protein detected in patients recovering from meningitidis, where it induces bactericidal antibodies. Binds heparin and heparan sulfate proteoglycan in vitro via the Arg-rich motif. Heparin-binding to this protein protects bacteria against killing by bactericidal antibodies (serum killing). Binds to human cells via the Arg-rich region; binding may require the intact protein as protein fragments do not bind to human cells. Protein binding to human cells is abolished by treatment with heparinase III but not chondroitinase ABC. The bacteria binds a number of human extracellular sialyated and/or sulfated glycans via this protein, including chondroitin sulfate (KD=5.2 nM), heparin (KD=52 nM) and ganglioside GT3 (KD=210 nM). The recombinant protein binds DNA non-specifically. Its function is as follows. Plays a role in extracellular-DNA (eDNA) mediated biofilm formation. In strain MC58 eDNA stimulates biofilm formation. When NHBA is not processed by NalP there is an increase in positively charged, NHBA- and IgA-derived DNA-binding peptides on the cell surface, resulting in increased DNA-binding peptides and increased biofilm formation. In terms of biological role, [C2 fragment] Localizes to host mitochondria when applied to the apical side of human endothelial cell layers, where it induces production of reactive oxygen species which lead to increased permeability of host endothelial cells. The C1 fragment (which lacks the first 14 residues of C2) does not have this effect. It is not known if this occurs during Neisseria infections. This chain is Neisserial heparin binding antigen, found in Neisseria meningitidis serogroup B (strain ATCC BAA-335 / MC58).